We begin with the raw amino-acid sequence, 169 residues long: Putative phosphoesterase SSP1770 (169 aa).

Residue histidine 34 is the Proton donor of the active site. Short sequence motifs (HXTX) lie at residues 34–37 (HITI) and 115–118 (HFTI). Residue histidine 115 is the Proton acceptor of the active site.

The protein belongs to the 2H phosphoesterase superfamily. YjcG family.

This is Putative phosphoesterase SSP1770 from Staphylococcus saprophyticus subsp. saprophyticus (strain ATCC 15305 / DSM 20229 / NCIMB 8711 / NCTC 7292 / S-41).